Consider the following 201-residue polypeptide: Large ribosomal subunit protein bL25 (201 aa).

It belongs to the bacterial ribosomal protein bL25 family. CTC subfamily. As to quaternary structure, part of the 50S ribosomal subunit; part of the 5S rRNA/L5/L18/L25 subcomplex. Contacts the 5S rRNA. Binds to the 5S rRNA independently of L5 and L18.

This is one of the proteins that binds to the 5S RNA in the ribosome where it forms part of the central protuberance. This Burkholderia vietnamiensis (strain G4 / LMG 22486) (Burkholderia cepacia (strain R1808)) protein is Large ribosomal subunit protein bL25.